Consider the following 185-residue polypeptide: Signal peptidase complex subunit 3 (185 aa).

Over 1–16 (MHTSIQRIQQTFSQAS) the chain is Cytoplasmic. The helical; Signal-anchor for type II membrane protein transmembrane segment at 17-37 (TVLSIIAAIVFVVSYIQLVVA) threads the bilayer. Residues 38 to 185 (NVWSLPEANF…KGSIKFPQLV (148 aa)) lie on the Lumenal side of the membrane. A glycan (N-linked (GlcNAc...) asparagine) is linked at asparagine 151.

Belongs to the SPCS3 family. Component of the signal peptidase complex (SPC) composed of a catalytic subunit SEC11 and three accessory subunits SPC1, SPC2 and SPC3. The complex induces a local thinning of the ER membrane which is used to measure the length of the signal peptide (SP) h-region of protein substrates. This ensures the selectivity of the complex towards h-regions shorter than 18-20 amino acids. SPC associates with the translocon complex.

It is found in the endoplasmic reticulum membrane. Essential component of the signal peptidase complex (SPC) which catalyzes the cleavage of N-terminal signal sequences from nascent proteins as they are translocated into the lumen of the endoplasmic reticulum. Essential for the SPC catalytic activity, possibly by stabilizing and positioning the active center of the complex close to the lumenal surface. Essential for viability. This Yarrowia lipolytica (strain CLIB 122 / E 150) (Yeast) protein is Signal peptidase complex subunit 3 (SPC3).